The following is a 357-amino-acid chain: Phosphoribosylformylglycinamidine cyclo-ligase (357 aa).

The protein belongs to the AIR synthase family.

Its subcellular location is the cytoplasm. The catalysed reaction is 2-formamido-N(1)-(5-O-phospho-beta-D-ribosyl)acetamidine + ATP = 5-amino-1-(5-phospho-beta-D-ribosyl)imidazole + ADP + phosphate + H(+). It participates in purine metabolism; IMP biosynthesis via de novo pathway; 5-amino-1-(5-phospho-D-ribosyl)imidazole from N(2)-formyl-N(1)-(5-phospho-D-ribosyl)glycinamide: step 2/2. This is Phosphoribosylformylglycinamidine cyclo-ligase from Nitrobacter winogradskyi (strain ATCC 25391 / DSM 10237 / CIP 104748 / NCIMB 11846 / Nb-255).